The sequence spans 345 residues: Nuclear distribution protein nudE-like 1-A (345 aa).

Residues 19 to 190 (WRELSKRLKQ…LAVRERQTDG (172 aa)) adopt a coiled-coil conformation. The segment covering 182 to 192 (AVRERQTDGTR) has biased composition (basic and acidic residues). 2 disordered regions span residues 182–206 (AVRERQTDGTRKSAPSSPTLDCDKT) and 326–345 (PPGVLGSRPPSPPGMLPLSV). Residues 334–345 (PPSPPGMLPLSV) show a composition bias toward pro residues.

It belongs to the nudE family. Phosphorylated in mitosis.

It localises to the cytoplasm. The protein resides in the cytoskeleton. The protein localises to the microtubule organizing center. It is found in the centrosome. Its subcellular location is the spindle. In terms of biological role, required for organization of the cellular microtubule array and microtubule anchoring at the centrosome. Positively regulates the activity of the minus-end directed microtubule motor protein dynein. May enhance dynein-mediated microtubule sliding by targeting dynein to the microtubule plus end. Positively regulates lysosome peripheral distribution and ruffled border formation in osteoclasts. The polypeptide is Nuclear distribution protein nudE-like 1-A (ndel1-a) (Xenopus laevis (African clawed frog)).